The primary structure comprises 508 residues: Ribonuclease Y (508 aa).

A helical transmembrane segment spans residues 2–22; it reads IITALIAIAVGFLIGYLARKI. The KH domain maps to 198–261; that stretch reads TVSVVTLPND…EVARIALEKL (64 aa). One can recognise an HD domain in the interval 324-417; that stretch reads VLKHSIEVAH…VQAADAISAA (94 aa).

This sequence belongs to the RNase Y family.

It is found in the cell membrane. Functionally, endoribonuclease that initiates mRNA decay. This Thermoanaerobacter pseudethanolicus (strain ATCC 33223 / 39E) (Clostridium thermohydrosulfuricum) protein is Ribonuclease Y.